Reading from the N-terminus, the 310-residue chain is Ornithine carbamoyltransferase (310 aa).

Carbamoyl phosphate contacts are provided by residues 56–59 (STRT), glutamine 83, arginine 107, and 134–137 (HPCQ). L-ornithine contacts are provided by residues asparagine 165, aspartate 229, and 233–234 (SM). Carbamoyl phosphate is bound by residues 269-270 (CL) and arginine 297.

The protein belongs to the aspartate/ornithine carbamoyltransferase superfamily. OTCase family.

The protein localises to the cytoplasm. It catalyses the reaction carbamoyl phosphate + L-ornithine = L-citrulline + phosphate + H(+). It functions in the pathway amino-acid biosynthesis; L-arginine biosynthesis; L-arginine from L-ornithine and carbamoyl phosphate: step 1/3. In terms of biological role, reversibly catalyzes the transfer of the carbamoyl group from carbamoyl phosphate (CP) to the N(epsilon) atom of ornithine (ORN) to produce L-citrulline. This Symbiobacterium thermophilum (strain DSM 24528 / JCM 14929 / IAM 14863 / T) protein is Ornithine carbamoyltransferase.